We begin with the raw amino-acid sequence, 275 residues long: Methylglyoxal reductase DkgA (275 aa).

Residue Tyr51 is the Proton donor of the active site. His107 contributes to the substrate binding site. NADP(+) is bound at residue 187 to 241; the sequence is SPLAQGGEGVFDQKVIRELADKYGKTPAQIVIRWHLDCGLVVIPKSVTPSRIAEN.

It belongs to the aldo/keto reductase family. As to quaternary structure, monomer.

Its subcellular location is the cytoplasm. The enzyme catalyses hydroxyacetone + NADP(+) = methylglyoxal + NADPH + H(+). Its function is as follows. Aldo-keto reductase that significantly contributes to cellular methylglyoxal detoxification by catalyzing the NADPH-dependent conversion of methylglyoxal to acetol. This chain is Methylglyoxal reductase DkgA, found in Salmonella typhimurium (strain LT2 / SGSC1412 / ATCC 700720).